A 347-amino-acid polypeptide reads, in one-letter code: Fe(2+) transport protein 1 (347 aa).

Positions 1 to 22 are cleaved as a signal peptide; the sequence is MASNSALLMKTIFLVLIFVSFA. At 23-52 the chain is on the extracellular side; it reads ISPATSTAPEECGSESANPCVNKAKALPLK. A helical transmembrane segment spans residues 53-73; that stretch reads VIAIFVILIASMIGVGAPLFS. Residues 74–84 lie on the Cytoplasmic side of the membrane; that stretch reads RNVSFLQPDGN. The helical transmembrane segment at 85–105 threads the bilayer; the sequence is IFTIIKCFASGIILGTGFMHV. The Extracellular segment spans residues 106 to 125; it reads LPDSFEMLSSICLEENPWHK. The helical transmembrane segment at 126–146 threads the bilayer; it reads FPFSGFLAMLSGLITLAIDSM. The Cytoplasmic portion of the chain corresponds to 147 to 192; that stretch reads ATSLYTSKNAVGIMPHGHGHGHGPANDVTLPIKEDDSSNAQLLRYR. Glycyl lysine isopeptide (Lys-Gly) (interchain with G-Cter in ubiquitin) cross-links involve residues lysine 154 and lysine 179. The chain crosses the membrane as a helical span at residues 193–213; sequence VIAMVLELGIIVHSVVIGLSL. Residues 214–224 are Extracellular-facing; it reads GATSDTCTIKG. The helical transmembrane segment at 225-245 threads the bilayer; it reads LIAALCFHQMFEGMGLGGCIL. Residues 246–254 lie on the Cytoplasmic side of the membrane; that stretch reads QAEYTNMKK. Residues 255–275 traverse the membrane as a helical segment; the sequence is FVMAFFFAVTTPFGIALGIAL. The Extracellular segment spans residues 276–286; that stretch reads STVYQDNSPKA. A helical membrane pass occupies residues 287–307; the sequence is LITVGLLNACSAGLLIYMALV. At 308–326 the chain is on the cytoplasmic side; the sequence is DLLAAEFMGPKLQGSIKMQ. Residues 327–347 traverse the membrane as a helical segment; sequence FKCLIAALLGCGGMSIIAKWA.

It belongs to the ZIP transporter (TC 2.A.5) family. Interacts with FREE1. Post-translationally, monoubiquitinated on several Lys residues. Monoubiquitination controls trafficking from the plasma membrane and targeting to the vacuole. Expressed in the external cell layers of the root including the lateral branching zone. Also detected in flowers before pollination.

The protein resides in the cell membrane. It is found in the early endosome. It localises to the golgi apparatus. Its subcellular location is the trans-Golgi network. The protein localises to the vacuole. High-affinity iron transporter that plays a key role in the uptake of iron from the rhizosphere across the plasma membrane in the root epidermal layer. Acts as the principal regulator of iron homeostasis in planta. Also mediates the heavy metals uptake under iron-deficiency by its ability to transport cobalt, cadmium, manganese and/or zinc ions. The protein is Fe(2+) transport protein 1 (IRT1) of Arabidopsis thaliana (Mouse-ear cress).